The following is a 232-amino-acid chain: 2-C-methyl-D-erythritol 4-phosphate cytidylyltransferase (232 aa).

The protein belongs to the IspD/TarI cytidylyltransferase family. IspD subfamily.

It catalyses the reaction 2-C-methyl-D-erythritol 4-phosphate + CTP + H(+) = 4-CDP-2-C-methyl-D-erythritol + diphosphate. It participates in isoprenoid biosynthesis; isopentenyl diphosphate biosynthesis via DXP pathway; isopentenyl diphosphate from 1-deoxy-D-xylulose 5-phosphate: step 2/6. Functionally, catalyzes the formation of 4-diphosphocytidyl-2-C-methyl-D-erythritol from CTP and 2-C-methyl-D-erythritol 4-phosphate (MEP). This chain is 2-C-methyl-D-erythritol 4-phosphate cytidylyltransferase, found in Vibrio cholerae serotype O1 (strain ATCC 39315 / El Tor Inaba N16961).